Here is a 395-residue protein sequence, read N- to C-terminus: Zinc finger protein 385D (395 aa).

3 consecutive Matrin-type zinc fingers follow at residues 80–110 (ISCN…KLKA), 204–234 (LYCS…MLEA), and 267–297 (FHCE…RASG). Residues 282–308 (LKQHISSRRHKDRASGKPPKPKYSPYN) are disordered.

Its subcellular location is the nucleus. This is Zinc finger protein 385D (Znf385d) from Rattus norvegicus (Rat).